A 204-amino-acid chain; its full sequence is uncharacterized protein (204 aa).

The next 6 helical transmembrane spans lie at threonine 19 to leucine 39, alanine 42 to alanine 62, glycine 78 to isoleucine 98, proline 116 to alanine 136, glycine 143 to isoleucine 163, and alanine 167 to valine 187.

Belongs to the acetate uptake transporter (AceTr) (TC 2.A.96) family.

It is found in the cell membrane. This is an uncharacterized protein from Methanothermobacter thermautotrophicus (strain ATCC 29096 / DSM 1053 / JCM 10044 / NBRC 100330 / Delta H) (Methanobacterium thermoautotrophicum).